Consider the following 100-residue polypeptide: NAD(P)H-quinone oxidoreductase subunit 4L, chloroplastic (100 aa).

Helical transmembrane passes span 2–22 (ILQH…FGLI), 28–48 (VKIL…LVIF), and 61–81 (LFGL…LAIL).

The protein belongs to the complex I subunit 4L family. In terms of assembly, NDH is composed of at least 16 different subunits, 5 of which are encoded in the nucleus.

It is found in the plastid. The protein resides in the chloroplast thylakoid membrane. The enzyme catalyses a plastoquinone + NADH + (n+1) H(+)(in) = a plastoquinol + NAD(+) + n H(+)(out). The catalysed reaction is a plastoquinone + NADPH + (n+1) H(+)(in) = a plastoquinol + NADP(+) + n H(+)(out). Functionally, NDH shuttles electrons from NAD(P)H:plastoquinone, via FMN and iron-sulfur (Fe-S) centers, to quinones in the photosynthetic chain and possibly in a chloroplast respiratory chain. The immediate electron acceptor for the enzyme in this species is believed to be plastoquinone. Couples the redox reaction to proton translocation, and thus conserves the redox energy in a proton gradient. This Chara vulgaris (Common stonewort) protein is NAD(P)H-quinone oxidoreductase subunit 4L, chloroplastic.